A 694-amino-acid chain; its full sequence is Follicle-stimulating hormone receptor (694 aa).

An N-terminal signal peptide occupies residues 1-17 (MALLLVSLLAFLGSGAG). Cystine bridges form between cysteine 18–cysteine 25 and cysteine 23–cysteine 32. One can recognise an LRRNT domain in the interval 18-46 (CHHWLCHCSDRVFLCQDSKVTEIPPDLPR). Over 18–365 (CHHWLCHCSD…EDIMGYNILR (348 aa)) the chain is Extracellular. LRR repeat units follow at residues 49-72 (IELR…FKDL), 73-97 (EKIE…LPKL), 98-118 (HEIR…AFQN), 119-143 (LPNL…KIQS), 144-169 (LQKV…MGLS), 170-192 (FDSL…AFNG), 193-216 (TQLD…VFRG), 217-240 (ASGP…GLEN), and 241-259 (LKKL…PSLD). Residues asparagine 191 and asparagine 199 are each glycosylated (N-linked (GlcNAc...) asparagine). 4 disulfides stabilise this stretch: cysteine 275–cysteine 345, cysteine 276–cysteine 292, cysteine 276–cysteine 355, and cysteine 292–cysteine 337. N-linked (GlcNAc...) asparagine glycosylation is found at asparagine 293 and asparagine 311. Residues 366–386 (VLIWFISILAITGNITVLVIL) traverse the membrane as a helical segment. The Cytoplasmic segment spans residues 387–397 (TTSQYKLTVPR). The helical transmembrane segment at 398-420 (FLMCNLAFADLCIGIYLLPIASV) threads the bilayer. The Extracellular portion of the chain corresponds to 421-442 (DIHTKSQYHNYAIDWQTAVGCD). Cysteines 441 and 516 form a disulfide. A helical transmembrane segment spans residues 443–464 (AAGFFTAFASELSVYTLTAIPL). Residues 465–484 (ERWHTITHAMQLERKVQLRH) are Cytoplasmic-facing. The helical transmembrane segment at 485-507 (AASVMVMGWVFAFAAALLPIFGV) threads the bilayer. Residues 508–527 (SSYMKVSICLPIDIDSPLSQ) are Extracellular-facing. A helical transmembrane segment spans residues 528 to 549 (LYVMALLVLNVLAFVVICGCYT). Topologically, residues 550-572 (HIYLTVRNPNIVSSSSDTKIAKR) are cytoplasmic. Residues 573 to 596 (MATLIFTDFLCMAPISLFAISASL) traverse the membrane as a helical segment. The Extracellular segment spans residues 597-607 (KAPLITVSKAK). The chain crosses the membrane as a helical span at residues 608–629 (ILLVLFYPINSCANPFLYAIFT). Residues 630-694 (KNFRRDFFIL…LVPLSQSAHN (65 aa)) lie on the Cytoplasmic side of the membrane.

It belongs to the G-protein coupled receptor 1 family. FSH/LSH/TSH subfamily. Homotrimer. Functions as a homotrimer binding the FSH hormone heterodimer composed of CGA and FSHB. Interacts with ARRB2. Interacts with APPL2; interaction is independent of follicle stimulating hormone stimulation. Post-translationally, N-glycosylated; indirectly required for FSH-binding, possibly via a conformational change that allows high affinity binding of hormone.

The protein resides in the cell membrane. Its function is as follows. G protein-coupled receptor for follitropin, the follicle-stimulating hormone. Through cAMP production activates the downstream PI3K-AKT and ERK1/ERK2 signaling pathways. The chain is Follicle-stimulating hormone receptor (FSHR) from Mesocricetus auratus (Golden hamster).